The following is a 201-amino-acid chain: Translation initiation factor IF-3 (201 aa).

The segment at 167–201 is disordered; sequence PHRGAKTRARARHPGEPAGGPPPKPTAGDSKAAPN. Basic residues predominate over residues 169–178; it reads RGAKTRARAR.

It belongs to the IF-3 family. Monomer.

Its subcellular location is the cytoplasm. In terms of biological role, IF-3 binds to the 30S ribosomal subunit and shifts the equilibrium between 70S ribosomes and their 50S and 30S subunits in favor of the free subunits, thus enhancing the availability of 30S subunits on which protein synthesis initiation begins. The protein is Translation initiation factor IF-3 of Mycobacterium bovis (strain ATCC BAA-935 / AF2122/97).